A 451-amino-acid polypeptide reads, in one-letter code: Molybdate-anion transporter (451 aa).

The next 12 membrane-spanning stretches (helical) occupy residues 1–21 (MLVT…VLEF), 45–65 (YDFY…GPYL), 79–99 (IAII…VSVP), 130–150 (FVLM…FSCF), 180–200 (NGGI…WLGL), 201–221 (GPAS…VLVI), 251–271 (VLLL…FIFL), 281–301 (APLG…SSLY), 316–336 (VLCL…FSTA), 346–366 (LLAF…MRFL), 378–398 (GVLN…LLVL), and 410–430 (MFSL…SLFT).

This sequence belongs to the major facilitator superfamily.

It is found in the cell membrane. In terms of biological role, mediates high-affinity intracellular uptake of the rare oligo-element molybdenum. The sequence is that of Molybdate-anion transporter (mfsd5) from Xenopus laevis (African clawed frog).